We begin with the raw amino-acid sequence, 251 residues long: Triosephosphate isomerase (251 aa).

Position 9 to 11 (9 to 11 (NWK)) interacts with substrate. Catalysis depends on histidine 96, which acts as the Electrophile. The active-site Proton acceptor is the glutamate 167. Substrate-binding positions include glycine 173, serine 213, and 234–235 (GG).

This sequence belongs to the triosephosphate isomerase family. In terms of assembly, homodimer.

The protein localises to the cytoplasm. It carries out the reaction D-glyceraldehyde 3-phosphate = dihydroxyacetone phosphate. It functions in the pathway carbohydrate biosynthesis; gluconeogenesis. Its pathway is carbohydrate degradation; glycolysis; D-glyceraldehyde 3-phosphate from glycerone phosphate: step 1/1. In terms of biological role, involved in the gluconeogenesis. Catalyzes stereospecifically the conversion of dihydroxyacetone phosphate (DHAP) to D-glyceraldehyde-3-phosphate (G3P). This Phocaeicola vulgatus (strain ATCC 8482 / DSM 1447 / JCM 5826 / CCUG 4940 / NBRC 14291 / NCTC 11154) (Bacteroides vulgatus) protein is Triosephosphate isomerase.